The following is a 273-amino-acid chain: Orotidine 5'-phosphate decarboxylase (273 aa).

Lysine 95 serves as the catalytic Proton donor.

The protein belongs to the OMP decarboxylase family. Type 2 subfamily.

It carries out the reaction orotidine 5'-phosphate + H(+) = UMP + CO2. The protein operates within pyrimidine metabolism; UMP biosynthesis via de novo pathway; UMP from orotate: step 2/2. This chain is Orotidine 5'-phosphate decarboxylase, found in Bordetella bronchiseptica (strain ATCC BAA-588 / NCTC 13252 / RB50) (Alcaligenes bronchisepticus).